Reading from the N-terminus, the 572-residue chain is Frizzled-7 (572 aa).

An N-terminal signal peptide occupies residues 1–32; that stretch reads MRGPGTAASHSPLGLCALVLALLGALPTDTRA. Topologically, residues 33–254 are extracellular; the sequence is QPYHGEKGIS…EEERRFARLW (222 aa). The region spanning 44–163 is the FZ domain; sequence PDHGFCQPIS…HGAGEICVGQ (120 aa). Disulfide bonds link C49/C110, C57/C103, C94/C131, C120/C160, and C124/C148. An N-linked (GlcNAc...) asparagine glycan is attached at N63. N164 is a glycosylation site (N-linked (GlcNAc...) asparagine). A helical membrane pass occupies residues 255-275; sequence VGVWSVLCCASTLFTVLTYLV. Residues 276 to 286 are Cytoplasmic-facing; it reads DMRRFSYPERP. A helical membrane pass occupies residues 287–307; it reads IIFLSGCYFMVAVAHVAGFLL. Topologically, residues 308-334 are extracellular; the sequence is EDRAVCVERFSDDGYRTVAQGTKKEGC. A helical transmembrane segment spans residues 335–355; it reads TILFMVLYFFGMASSIWWVIL. At 356 to 377 the chain is on the cytoplasmic side; that stretch reads SLTWFLAAGMKWGHEAIEANSQ. A helical membrane pass occupies residues 378-398; it reads YFHLAAWAVPAVKTITILAMG. The Extracellular portion of the chain corresponds to 399–421; the sequence is QVDGDLLSGVCYVGLSSVDALRG. The helical transmembrane segment at 422-442 threads the bilayer; sequence FVLAPLFVYLFIGTSFLLAGF. Topologically, residues 443–468 are cytoplasmic; sequence VSLFRIRTIMKHDGTKTEKLEKLMVR. A helical membrane pass occupies residues 469-489; the sequence is IGVFSVLYTVPATIVLACYFY. Residues 490–526 lie on the Extracellular side of the membrane; that stretch reads EQAFREHWERTWLLQTCKSYAVPCPPGHFSPMSPDFT. Residues 527 to 547 traverse the membrane as a helical segment; the sequence is VFMIKYLMTMIVGITTGFWIW. The Cytoplasmic portion of the chain corresponds to 548 to 572; sequence SGKTLQSWRRFYHRLSHSSKGETAV. The Lys-Thr-X-X-X-Trp motif, mediates interaction with the PDZ domain of Dvl family members motif lies at 550 to 555; that stretch reads KTLQSW. Positions 570–572 match the PDZ-binding motif; the sequence is TAV.

This sequence belongs to the G-protein coupled receptor Fz/Smo family. Interacts with MAGI3. Interacts with DVL1. Interacts with CCDC88C/DAPLE; the interaction displaces DVL1 from FZD7, leading to inhibition of canonical Wnt signaling and triggering of non-canonical Wnt responses. Interacts with MYOC. Binds to SDCBP; this interaction is increased by inositol trisphosphate (IP3). Interacts with glypican GPC3. Ubiquitinated by ZNRF3, leading to its degradation by the proteasome.

It is found in the cell membrane. It localises to the endosome membrane. Its function is as follows. Receptor for Wnt proteins. Most frizzled receptors are coupled to the beta-catenin canonical signaling pathway, which leads to the activation of disheveled proteins, inhibition of GSK-3 kinase, nuclear accumulation of beta-catenin and activation of Wnt target genes. A second signaling pathway involving PKC and calcium fluxes has been seen for some family members, but it is not yet clear if it represents a distinct pathway or if it can be integrated in the canonical pathway, as PKC seems to be required for Wnt-mediated inactivation of GSK-3 kinase. Both pathways seem to involve interactions with G-proteins. Activation by WNT8 induces expression of beta-catenin target genes. Following ligand activation, binds to CCDC88C/DAPLE which displaces DVL1 from FZD7 and leads to inhibition of canonical Wnt signaling, activation of G-proteins by CCDC88C and triggering of non-canonical Wnt responses. May be involved in transduction and intercellular transmission of polarity information during tissue morphogenesis and/or in differentiated tissues. The polypeptide is Frizzled-7 (Fzd7) (Mus musculus (Mouse)).